The chain runs to 247 residues: MNVLLCSINTFKRLYDISAVEVGQHFYWQMGDFQVHAQVLITSWVVIAILLGSTILVVRNPQTIPNFGQNFFEYVLEFIRDVSKTQIGEEYGPWVPFIGTLFLFIFVSNWSGALLPWKIIQLPHGELAAPTNDINTTVALALLTSVAYFYAGISKKGLAYFGKYIQPTPILLPINILEDFTKPLSLSFRLFGNILADELVVVVLVSLVPLVVPIPVMFLGLFTSGIQALIFATLAAAYIGESMEGHH.

The next 5 membrane-spanning stretches (helical) occupy residues 38–58 (QVLI…ILVV), 95–115 (VPFI…GALL), 134–154 (INTT…AGIS), 199–219 (LVVV…VMFL), and 220–240 (GLFT…AYIG).

Belongs to the ATPase A chain family. In terms of assembly, F-type ATPases have 2 components, CF(1) - the catalytic core - and CF(0) - the membrane proton channel. CF(1) has five subunits: alpha(3), beta(3), gamma(1), delta(1), epsilon(1). CF(0) has four main subunits: a, b, b' and c.

The protein localises to the plastid. It localises to the chloroplast thylakoid membrane. Key component of the proton channel; it plays a direct role in the translocation of protons across the membrane. The polypeptide is ATP synthase subunit a, chloroplastic (Lotus japonicus (Lotus corniculatus var. japonicus)).